Reading from the N-terminus, the 451-residue chain is Phenylalanine--tRNA ligase, mitochondrial (451 aa).

Residues 157–160, arginine 179, 186–188, and 193–195 each bind substrate; these read SAHQ, QHY, and QLE. Residue lysine 202 is modified to N6-acetyllysine. Residues glutamate 287 and phenylalanine 312 each coordinate substrate. An FDX-ACB domain is found at 358–450; it reads SKYPAVINDI…AVQLLGVEGR (93 aa).

It belongs to the class-II aminoacyl-tRNA synthetase family. As to quaternary structure, monomer.

The protein resides in the mitochondrion matrix. The protein localises to the mitochondrion. The catalysed reaction is tRNA(Phe) + L-phenylalanine + ATP = L-phenylalanyl-tRNA(Phe) + AMP + diphosphate + H(+). Functionally, is responsible for the charging of tRNA(Phe) with phenylalanine in mitochondrial translation. To a lesser extent, also catalyzes direct attachment of m-Tyr (an oxidized version of Phe) to tRNA(Phe), thereby opening the way for delivery of the misacylated tRNA to the ribosome and incorporation of ROS-damaged amino acid into proteins. This Homo sapiens (Human) protein is Phenylalanine--tRNA ligase, mitochondrial (FARS2).